Consider the following 858-residue polypeptide: Protein translocase subunit SecA (858 aa).

Residues Q85, 103–107 (GEGKT), and D511 each bind ATP. Positions 840, 842, 851, and 852 each coordinate Zn(2+).

It belongs to the SecA family. Monomer and homodimer. Part of the essential Sec protein translocation apparatus which comprises SecA, SecYEG and auxiliary proteins SecDF. Other proteins may also be involved. It depends on Zn(2+) as a cofactor.

The protein resides in the cell membrane. It is found in the cytoplasm. The enzyme catalyses ATP + H2O + cellular proteinSide 1 = ADP + phosphate + cellular proteinSide 2.. Its function is as follows. Part of the Sec protein translocase complex. Interacts with the SecYEG preprotein conducting channel. Has a central role in coupling the hydrolysis of ATP to the transfer of proteins into and across the cell membrane, serving as an ATP-driven molecular motor driving the stepwise translocation of polypeptide chains across the membrane. The chain is Protein translocase subunit SecA from Lachnoclostridium phytofermentans (strain ATCC 700394 / DSM 18823 / ISDg) (Clostridium phytofermentans).